The primary structure comprises 216 residues: Talanin (216 aa).

Isoform 4 is expressed in placenta, lung, kidney and pancreas.

Functionally, may play a role in uric acid excretion. This chain is Talanin (ZNF365), found in Homo sapiens (Human).